Reading from the N-terminus, the 350-residue chain is Phenylalanine--tRNA ligase alpha subunit (350 aa).

Glu262 provides a ligand contact to Mg(2+).

This sequence belongs to the class-II aminoacyl-tRNA synthetase family. Phe-tRNA synthetase alpha subunit type 1 subfamily. As to quaternary structure, tetramer of two alpha and two beta subunits. Requires Mg(2+) as cofactor.

The protein resides in the cytoplasm. It carries out the reaction tRNA(Phe) + L-phenylalanine + ATP = L-phenylalanyl-tRNA(Phe) + AMP + diphosphate + H(+). In Thermus thermophilus (strain ATCC BAA-163 / DSM 7039 / HB27), this protein is Phenylalanine--tRNA ligase alpha subunit.